A 332-amino-acid chain; its full sequence is Long form salivary protein D7L2 (332 aa).

Positions 1–21 are cleaved as a signal peptide; it reads MFPPRKFLLSSFILAALHVTA. Intrachain disulfides connect cysteine 40–cysteine 77 and cysteine 73–cysteine 133. Tryptophan 61 contacts leukotriene E4. Glycine 157 and lysine 176 together coordinate leukotriene E4. Intrachain disulfides connect cysteine 184–cysteine 219, cysteine 200–cysteine 331, and cysteine 259–cysteine 278. Noradrenaline contacts are provided by glutamate 185, arginine 203, and histidine 216. Noradrenaline contacts are provided by aspartate 294 and glutamate 297.

This sequence belongs to the PBP/GOBP family. In terms of assembly, interacts with human CD4. As to expression, saliva (at protein level). Female salivary gland (at protein level). Detected in the head and thorax of the female mosquitoes, where the salivary glands are located.

It is found in the secreted. In terms of biological role, modulates blood feeding of female mosquitoes on vertebrate species by binding and sequestering different mediators involved in the host response, such as biogenic amines and eicosanoids. Binds serotonin, histamine, tryptamine, noradrenaline, leukotriene B4, leukotriene C4, leukotriene D4, leukotriene E4 and U-46619, a stable analog of thromboxane A2. Does not bind adrenaline. Exhibits vasodilating activity. Inhibits agonist-induced platelet aggregation but not blood clotting. (Microbial infection) Probably promotes Plasmodium gallinaceum oocyst development in mosquito midgut. The sequence is that of Long form salivary protein D7L2 from Aedes aegypti (Yellowfever mosquito).